A 398-amino-acid polypeptide reads, in one-letter code: MKKKFLKGLCCAFVISITCLGASSKAYGWDGKKDGTGTHSMIVTQAVKVLENDMSKDEPEIVKQNFKILQDNMHKFQLGSTYPDYDPNAYKLFQDHFWDPDTDHNFSKDNLWYLSYSIKDTAESQVRKFTALARNEWEKGNYEKATWYFGQAMHYFGDLNTPYHAANVTAVDSIGHTKYEGFAEKRKDQYRINTTGIKTNEGFYADALKNSNFDSWSKEYCKGWAKQAKNLYYSHSTMKHTNEDWDYSASHALKNAQMGTAGCIYRFLYDVSKDLLPTENHKINGLMVVIKTANEIAAGTDDYVYFGIERKDGTVQEWTLDNPGNDFEANQEDTYILKIKKPSIKFSDINRMWIRKANFTPVSDDWKVKGIKVIADGSVQYEKQINKWIHGNEKYYIN.

A signal peptide spans 1–28 (MKKKFLKGLCCAFVISITCLGASSKAYG). The Zn(2+) site is built by Trp-29, His-39, Asp-84, His-96, His-154, Asp-158, His-164, His-176, and Glu-180. The Zn-dependent PLC domain maps to 29–278 (WDGKKDGTGT…YDVSKDLLPT (250 aa)). The interval 275 to 283 (LLPTENHKI) is linker. Residues 284–398 (NGLMVVIKTA…IHGNEKYYIN (115 aa)) form the PLAT domain. Ca(2+) is bound by residues Gly-299, Thr-300, Asp-301, Asp-321, Asn-322, Gly-324, Asn-325, Asp-326, and Asp-364.

The protein belongs to the bacterial zinc-metallophospholipase C family. Ca(2+) serves as cofactor. It depends on Zn(2+) as a cofactor.

The protein resides in the secreted. The enzyme catalyses a 1,2-diacyl-sn-glycero-3-phosphocholine + H2O = phosphocholine + a 1,2-diacyl-sn-glycerol + H(+). In terms of biological role, bacterial hemolysins are exotoxins that attack blood cell membranes and cause cell rupture. Binds to eukaryotic membranes where it hydrolyzes phosphatidylcholine, sphingomyelin and phosphatidylethanolamine. The diacylglycerol produced can activate both the arachidonic acid pathway, leading to modulation of the inflammatory response cascade and thrombosis, and protein kinase C, leading to activation of eukaryotic phospholipases and further membrane damage. This enzyme is hemolytic against horse erythrocytes. The polypeptide is Phospholipase C (plc) (Clostridium novyi).